The following is a 419-amino-acid chain: Gamma-glutamyl phosphate reductase (419 aa).

The protein belongs to the gamma-glutamyl phosphate reductase family.

Its subcellular location is the cytoplasm. The enzyme catalyses L-glutamate 5-semialdehyde + phosphate + NADP(+) = L-glutamyl 5-phosphate + NADPH + H(+). It functions in the pathway amino-acid biosynthesis; L-proline biosynthesis; L-glutamate 5-semialdehyde from L-glutamate: step 2/2. In terms of biological role, catalyzes the NADPH-dependent reduction of L-glutamate 5-phosphate into L-glutamate 5-semialdehyde and phosphate. The product spontaneously undergoes cyclization to form 1-pyrroline-5-carboxylate. The sequence is that of Gamma-glutamyl phosphate reductase from Oleidesulfovibrio alaskensis (strain ATCC BAA-1058 / DSM 17464 / G20) (Desulfovibrio alaskensis).